Reading from the N-terminus, the 876-residue chain is Valine--tRNA ligase (876 aa).

Residues 44-54 (PNVTGKLHLGH) carry the 'HIGH' region motif. Positions 520 to 524 (KMSKS) match the 'KMSKS' region motif. ATP is bound at residue Lys523. Residues 805–876 (LEGLIDMDKE…VKARIEQLKA (72 aa)) adopt a coiled-coil conformation.

This sequence belongs to the class-I aminoacyl-tRNA synthetase family. ValS type 1 subfamily. As to quaternary structure, monomer.

The protein resides in the cytoplasm. It catalyses the reaction tRNA(Val) + L-valine + ATP = L-valyl-tRNA(Val) + AMP + diphosphate. Functionally, catalyzes the attachment of valine to tRNA(Val). As ValRS can inadvertently accommodate and process structurally similar amino acids such as threonine, to avoid such errors, it has a 'posttransfer' editing activity that hydrolyzes mischarged Thr-tRNA(Val) in a tRNA-dependent manner. In Staphylococcus aureus (strain bovine RF122 / ET3-1), this protein is Valine--tRNA ligase.